The chain runs to 128 residues: Probable 4-amino-4-deoxy-L-arabinose-phosphoundecaprenol flippase subunit ArnF (128 aa).

The Cytoplasmic segment spans residues 1-2; the sequence is MG. Residues 3–23 form a helical membrane-spanning segment; that stretch reads LMWGLFSVIIASAAQLSMGFA. The Periplasmic portion of the chain corresponds to 24-35; the sequence is ASHLPPMTHLWD. The helical transmembrane segment at 36–56 threads the bilayer; it reads FIAALLAFGLDARILLLGLLG. The Cytoplasmic segment spans residues 57–76; sequence YLLSVFCWYKTLHKLALSKA. The chain crosses the membrane as a helical span at residues 77-97; it reads YALLSMSYVLVWIASMVLPGW. Topologically, residues 98–100 are periplasmic; that stretch reads EGT. Residues 101–121 traverse the membrane as a helical segment; it reads FSLKALLGVACIMSGLMLIFL. Topologically, residues 122–128 are cytoplasmic; it reads PTTKQRY.

It belongs to the ArnF family. Heterodimer of ArnE and ArnF.

It is found in the cell inner membrane. It participates in bacterial outer membrane biogenesis; lipopolysaccharide biosynthesis. Functionally, translocates 4-amino-4-deoxy-L-arabinose-phosphoundecaprenol (alpha-L-Ara4N-phosphoundecaprenol) from the cytoplasmic to the periplasmic side of the inner membrane. The chain is Probable 4-amino-4-deoxy-L-arabinose-phosphoundecaprenol flippase subunit ArnF from Escherichia coli O45:K1 (strain S88 / ExPEC).